The chain runs to 159 residues: E3 ubiquitin ligase complex SCF subunit sconC (159 aa).

The segment at 101 to 159 (ILAANYLDIKALLDVGCKTVANMIKGKSPEEIRKTFNIQNDFTPEEEDQIRRENEWAEE) is interaction with the F-box domain of F-box proteins.

It belongs to the SKP1 family. As to quaternary structure, component of the SCF (SKP1-CUL1-F-box protein) E3 ubiquitin ligase complexes.

The protein operates within protein modification; protein ubiquitination. Functionally, essential component of the SCF (SKP1-CUL1-F-box protein) E3 ubiquitin ligase complexes, which mediate the ubiquitination and subsequent proteasomal degradation of target proteins. Controls sulfur metabolite repression, probably by mediating the inactivation or degradation of the metR transcription factor. The chain is E3 ubiquitin ligase complex SCF subunit sconC (sconC) from Aspergillus clavatus (strain ATCC 1007 / CBS 513.65 / DSM 816 / NCTC 3887 / NRRL 1 / QM 1276 / 107).